We begin with the raw amino-acid sequence, 378 residues long: Chaperone protein DnaJ 2 (378 aa).

A J domain is found at 4-68 (DYYAVLGVRR…QKKQVYDLGG (65 aa)). The CR-type zinc finger occupies 130–212 (GTTKDIQVET…CAGDGRVRSR (83 aa)). The Zn(2+) site is built by cysteine 143, cysteine 146, cysteine 160, cysteine 163, cysteine 186, cysteine 189, cysteine 200, and cysteine 203. CXXCXGXG motif repeat units lie at residues 143–150 (CTTCSGEG), 160–167 (CDMCRGRG), 186–193 (CPQCQGFG), and 200–207 (CPECAGDG). A disordered region spans residues 351–378 (RGEERPTGQFQPGQQGLFSRLKDAFNGR). Over residues 358 to 367 (GQFQPGQQGL) the composition is skewed to polar residues.

This sequence belongs to the DnaJ family. Homodimer. Requires Zn(2+) as cofactor.

The protein localises to the cytoplasm. Participates actively in the response to hyperosmotic and heat shock by preventing the aggregation of stress-denatured proteins and by disaggregating proteins, also in an autonomous, DnaK-independent fashion. Unfolded proteins bind initially to DnaJ; upon interaction with the DnaJ-bound protein, DnaK hydrolyzes its bound ATP, resulting in the formation of a stable complex. GrpE releases ADP from DnaK; ATP binding to DnaK triggers the release of the substrate protein, thus completing the reaction cycle. Several rounds of ATP-dependent interactions between DnaJ, DnaK and GrpE are required for fully efficient folding. Also involved, together with DnaK and GrpE, in the DNA replication of plasmids through activation of initiation proteins. This chain is Chaperone protein DnaJ 2, found in Streptomyces avermitilis (strain ATCC 31267 / DSM 46492 / JCM 5070 / NBRC 14893 / NCIMB 12804 / NRRL 8165 / MA-4680).